The sequence spans 263 residues: uncharacterized protein (263 aa).

This sequence to B.subtilis soj.

This is an uncharacterized protein from Pseudomonas putida (strain ATCC 47054 / DSM 6125 / CFBP 8728 / NCIMB 11950 / KT2440).